The following is a 373-amino-acid chain: Ferroptosis suppressor protein 1 (373 aa).

The N-myristoyl glycine moiety is linked to residue Gly2. The chain crosses the membrane as a helical span at residues 7–27; it reads VESGALHVVIVGGGFGGIAAA. Residues 18–22, Arg54, and Val82 contribute to the 6-hydroxy-FAD site; that span reads GGGFG. The residue at position 168 (Lys168) is an N6-acetyllysine; by KAT2B. A 6-hydroxy-FAD-binding site is contributed by Asp285.

It belongs to the FAD-dependent oxidoreductase family. Interacts with importin subunits KPNA2 and IPO5; this interaction likely mediates the translocation into the nucleus upon oxidative stress. 6-hydroxy-FAD is required as a cofactor. In terms of processing, N-myristoylation at Gly-2 mediates the recruitment to lipid droplets and plasma membrane, enabling its anti-lipid peroxidation activity. Acetylation at Lys-168 prevents AIFM2 ubiquitination and degradation, thereby inhibiting ferroptosis. KAT2B mediates acetylation at Lys-168, while HDAC3 removes it. Post-translationally, ubiquitinated. AIFM2 undergoes 'Lys-29'-ubiquitination and proteasomal degradation, which is inhibited by acetylation at Lys-168. In terms of tissue distribution, detected in most normal tissues as two transcripts of 1.8 and 4.0 kb in length, respectively. Highly expressed in heart, moderately in liver and skeletal muscles, and expressed at low levels in placenta, lung, kidney, and pancreas. Both transcripts expressed following p53/TP53 induction. The shorter 1.8 kb transcript seems to be the major transcript in EB1 colon cancer cells.

The protein localises to the lipid droplet. The protein resides in the cell membrane. It is found in the cytoplasm. Its subcellular location is the mitochondrion membrane. It localises to the nucleus. It carries out the reaction ubiquinone-10 + NADH + H(+) = ubiquinol-10 + NAD(+). The enzyme catalyses phylloquinone + NADH + H(+) = phylloquinol + NAD(+). The catalysed reaction is menaquinone-4 + NADH + H(+) = menaquinol-4 + NAD(+). It catalyses the reaction menadione + NADH + H(+) = menadiol + NAD(+). Its activity is regulated as follows. The modification by 4-hydroxy-2-nonenal (HNE) adduction in mitochondria results in loss of the oxidoreductase activity and activation of a novel function in mitochondrial oxidative stress signaling. An NAD(P)H-dependent oxidoreductase that acts as a key inhibitor of ferroptosis. At the plasma membrane, catalyzes reduction of coenzyme Q/ubiquinone-10 to ubiquinol-10, a lipophilic radical-trapping antioxidant that prevents lipid oxidative damage and consequently ferroptosis. Acts in parallel to GPX4 to suppress phospholipid peroxidation and ferroptosis. This anti-ferroptotic function is independent of cellular glutathione levels. Also acts as a potent radical-trapping antioxidant by mediating warfarin-resistant vitamin K reduction in the canonical vitamin K cycle: catalyzes NAD(P)H-dependent reduction of vitamin K (phylloquinone, menaquinone-4 and menadione) to hydroquinone forms. Hydroquinones act as potent radical-trapping antioxidants inhibitor of phospholipid peroxidation and ferroptosis. May play a role in mitochondrial stress signaling. Upon oxidative stress, associates with the lipid peroxidation end product 4-hydroxy-2-nonenal (HNE) forming a lipid adduct devoid of oxidoreductase activity, which then translocates from mitochondria into the nucleus triggering DNA damage and cell death. Capable of DNA binding in a non-sequence specific way. The chain is Ferroptosis suppressor protein 1 from Homo sapiens (Human).